Reading from the N-terminus, the 172-residue chain is uncharacterized protein (172 aa).

Residues 21–75 (FKRILLELGLTLKEFSEISGIPYSTLYKVIQGKDFRVSTLIKILKTIRSFEKDEN) form the HTH cro/C1-type domain. A DNA-binding region (H-T-H motif) is located at residues 32-51 (LKEFSEISGIPYSTLYKVIQ).

This is an uncharacterized protein from Methanocaldococcus jannaschii (strain ATCC 43067 / DSM 2661 / JAL-1 / JCM 10045 / NBRC 100440) (Methanococcus jannaschii).